The primary structure comprises 573 residues: Solute carrier family 41 member 2 (573 aa).

The Extracellular portion of the chain corresponds to 1 to 162 (MTNCKGRSTI…KESSSIMALQ (162 aa)). The helical transmembrane segment at 163 to 183 (ILVPFLLAGFGTVTAGMVLDI) threads the bilayer. Over 184-195 (VQHWDVFKNVTE) the chain is Cytoplasmic. Residues 196 to 216 (VFILVPALLGLKGNLEMTLAS) traverse the membrane as a helical segment. The Extracellular segment spans residues 217 to 245 (RLSTAVNIGKMDSPIEKWNLIIGNLALKQ). Residues 246-266 (VQATVVGFLAAVAAVILGWIP) traverse the membrane as a helical segment. The Cytoplasmic portion of the chain corresponds to 267 to 282 (EGKYSFSHSILLCSSS). Residues 283-303 (VATAFIASLLQGIIMVGVIVG) form a helical membrane-spanning segment. The Extracellular portion of the chain corresponds to 304 to 313 (SKKTGINPDN). A helical transmembrane segment spans residues 314–334 (VATPIAASFGDLITLAILAWI). Topologically, residues 335 to 347 (SQGLYTCLETYYY) are cytoplasmic. The helical transmembrane segment at 348–368 (VSPLVGAFFLALTPMGIVIAA) threads the bilayer. At 369–376 (KHPATRTV) the chain is on the extracellular side. The helical transmembrane segment at 377-397 (LHSGWEPVITAMIISSIGGLI) threads the bilayer. At 398–406 (LDTTVSDPN) the chain is on the cytoplasmic side. Residues 407–427 (LVGIVVYTPVINGIGGNLVAI) traverse the membrane as a helical segment. The Extracellular portion of the chain corresponds to 428-469 (QASRISTYLHLHSIPGELPEEAKGCYYPCRTYYGTGVNNKSA). The chain crosses the membrane as a helical span at residues 470 to 490 (QVLLLLVIPGHLIFLYTIHLM). The Cytoplasmic portion of the chain corresponds to 491 to 499 (KSGHTSLTP). The helical transmembrane segment at 500–520 (IFIAVYLFAALLQVFTLLWIA) threads the bilayer. At 521-543 (DWMVHHFWKKGKDPDSFSIPYLT) the chain is on the extracellular side. The chain crosses the membrane as a helical span at residues 544–564 (ALGDLLGTALLAVGFHFLWLI). Residues 565 to 573 (GDRDGDVGD) are Cytoplasmic-facing.

The protein belongs to the SLC41A transporter family.

It localises to the cell membrane. The catalysed reaction is Mg(2+)(in) = Mg(2+)(out). It catalyses the reaction Mn(2+)(in) = Mn(2+)(out). It carries out the reaction Co(2+)(in) = Co(2+)(out). The enzyme catalyses Ni(2+)(in) = Ni(2+)(out). The catalysed reaction is Fe(2+)(in) = Fe(2+)(out). Functionally, acts as a plasma-membrane magnesium transporter. Can also mediate the transport of other divalent metal cations in an order of Ba(2+) &gt; Ni(2+) &gt; Co(2+) &gt; Fe(2+) &gt; Mn(2+). In Gallus gallus (Chicken), this protein is Solute carrier family 41 member 2 (SLC41A2).